An 830-amino-acid chain; its full sequence is Phenylalanine--tRNA ligase beta subunit (830 aa).

Residues 39–158 enclose the tRNA-binding domain; sequence GQSLDGVVVG…DDTPVGTPFP (120 aa). In terms of domain architecture, B5 spans 417–492; the sequence is PAEKTIALRP…RLHGYDQIPE (76 aa). Asp-470, Asp-476, Glu-479, and Glu-480 together coordinate Mg(2+). The tract at residues 490-510 is disordered; that stretch reads IPEPERVPVPSRTPEQPPEET. Positions 736-828 constitute an FDX-ACB domain; that stretch reads SRFPVVDRDL…LAENHGARLR (93 aa).

This sequence belongs to the phenylalanyl-tRNA synthetase beta subunit family. Type 1 subfamily. Tetramer of two alpha and two beta subunits. The cofactor is Mg(2+).

The protein localises to the cytoplasm. The enzyme catalyses tRNA(Phe) + L-phenylalanine + ATP = L-phenylalanyl-tRNA(Phe) + AMP + diphosphate + H(+). The chain is Phenylalanine--tRNA ligase beta subunit from Salinibacter ruber (strain DSM 13855 / M31).